Reading from the N-terminus, the 357-residue chain is Gas vesicle ATPase GvpN (357 aa).

Residues 22 to 36 (ATSASKNGGRTTPSA) show a composition bias toward polar residues. Residues 22-43 (ATSASKNGGRTTPSALTPRPRS) are disordered. ATP is bound at residue 72-79 (GPAGTGKT).

It belongs to the CbbQ/NirQ/NorQ/GpvN family. In terms of assembly, forms homodimers, probably interacts with other GV proteins including GvpA.

It localises to the gas vesicle. It is found in the cytoplasm. It catalyses the reaction ATP + H2O = ADP + phosphate + H(+). An ATPase that functions in gas vesicle formation. A minor component of the gas vesicle, also found in soluble extracts. Gas vesicles (GV) are hollow, gas filled proteinaceous nanostructures. During planktonic growth they allow positioning of the organism at a favorable depth for light or nutrient acquisition. This Ancylobacter aquaticus protein is Gas vesicle ATPase GvpN.